Consider the following 866-residue polypeptide: Retinoblastoma-related protein 2 (866 aa).

Residues 274 to 475 (TPITSAMTTA…EKGSSLYNSL (202 aa)) are domain A. The tract at residues 274–721 (TPITSAMTTA…NEVFVPAAKP (448 aa)) is pocket. The segment at 476-593 (IVARPSVASE…PVGGNEKCAD (118 aa)) is spacer. Residues 513–551 (LPATPSKKRAAGRDDNADPRSPKRPCNESRSPVVEHNLQ) form a disordered region. The span at 523 to 539 (AGRDDNADPRSPKRPCN) shows a compositional bias: basic and acidic residues. Residues 594-721 (VTIQIFFSKI…NEVFVPAAKP (128 aa)) are domain B. 2 disordered regions span residues 731 to 754 (TRPE…PFPN) and 839 to 866 (SLGQ…KPDT). The segment covering 841–850 (GQPNGGSTSL) has biased composition (polar residues).

It belongs to the retinoblastoma protein (RB) family. As to expression, ubiquitous.

It is found in the nucleus. In terms of biological role, regulator of biological processes that recruits a histone deacetylase to control gene transcription. May play a role in the entry into mitosis, negatively regulating the cell proliferation. Formation of stable complexes with geminiviridae replication-associated proteins may create a cellular environment which favors viral DNA replication. The sequence is that of Retinoblastoma-related protein 2 (RBR2) from Zea mays (Maize).